The following is a 321-amino-acid chain: MSGIENSGADAGEGRVKNAILIAGPTASGKSALALDLAERAGGVIVNSDSMQGYSVLDVLTARPEAADLARVPHFLYGHVHPGTAYSTGAWLRDVMKLIDDGMLSRRPVFVGGTGLYFRALAEGISEMPDIPPRIRDRWRYELKEQGAVKLHGLLLREDSRAAMQLKPTDSQRIVRALEVLDASGRSILEWQAERGRPLIDRQTARFLVIEPDRAALVDRIERRFDQMLDKGALEEVRQLAALGLDPDLPAMKAIGVRDLQAAMAGQLSFPEAIERAKIATRQYAKRQATWFRHQLGPEWQRLRPGDDLETTMQTLVANAT.

Residue 24–31 participates in ATP binding; that stretch reads GPTASGKS. 26-31 serves as a coordination point for substrate; sequence TASGKS. Interaction with substrate tRNA regions lie at residues 49–52 and 172–176; these read DSMQ and QRIVR.

This sequence belongs to the IPP transferase family. As to quaternary structure, monomer. Mg(2+) is required as a cofactor.

The catalysed reaction is adenosine(37) in tRNA + dimethylallyl diphosphate = N(6)-dimethylallyladenosine(37) in tRNA + diphosphate. Its function is as follows. Catalyzes the transfer of a dimethylallyl group onto the adenine at position 37 in tRNAs that read codons beginning with uridine, leading to the formation of N6-(dimethylallyl)adenosine (i(6)A). The chain is tRNA dimethylallyltransferase from Mesorhizobium japonicum (strain LMG 29417 / CECT 9101 / MAFF 303099) (Mesorhizobium loti (strain MAFF 303099)).